A 334-amino-acid chain; its full sequence is DCN1-like protein 3 (334 aa).

The DCUN1 domain maps to 112-301 (VSHQTLSKLF…LFDDFVDYEK (190 aa)). The segment at 308–334 (SGIHDDDNNNDDPLQSHVKAEDPGLVS) is disordered. Over residues 325-334 (VKAEDPGLVS) the composition is skewed to basic and acidic residues.

It localises to the cell membrane. In terms of biological role, promotes neddylation of cullin components of SCF-type E3 ubiquitin ligase complexes and thus regulates SCF-type complex activity. Function promotes cell proliferation. The polypeptide is DCN1-like protein 3 (Drosophila melanogaster (Fruit fly)).